The sequence spans 75 residues: Alpha-amylase inhibitor Paim-2 (75 aa).

Intrachain disulfides connect Cys-10–Cys-26 and Cys-44–Cys-72.

Inhibits mammalian alpha-amylases specifically but has no action on plant and microbial alpha-amylases. This is Alpha-amylase inhibitor Paim-2 from Streptomyces olivaceoviridis (Streptomyces corchorusii).